The following is a 188-amino-acid chain: UPF0461 protein C5orf24 homolog (188 aa).

Residue serine 37 is modified to Phosphoserine. Lysine 75 participates in a covalent cross-link: Glycyl lysine isopeptide (Lys-Gly) (interchain with G-Cter in SUMO2). Residues 79–142 (KKKKNLNRSG…GYKVSPGRPP (64 aa)) are disordered. The segment covering 80-92 (KKKNLNRSGKRGR) has biased composition (basic residues). Positions 94–107 (SGTTKSAGYRTSTG) are enriched in polar residues. Serine 121 and serine 180 each carry phosphoserine. Lysine 184 is covalently cross-linked (Glycyl lysine isopeptide (Lys-Gly) (interchain with G-Cter in SUMO2)).

It belongs to the UPF0461 family.

In Bos taurus (Bovine), this protein is UPF0461 protein C5orf24 homolog.